We begin with the raw amino-acid sequence, 319 residues long: tRNA pseudouridine synthase B (319 aa).

The active-site Nucleophile is aspartate 47.

It belongs to the pseudouridine synthase TruB family. Type 1 subfamily.

The enzyme catalyses uridine(55) in tRNA = pseudouridine(55) in tRNA. Functionally, responsible for synthesis of pseudouridine from uracil-55 in the psi GC loop of transfer RNAs. The protein is tRNA pseudouridine synthase B of Pseudoalteromonas translucida (strain TAC 125).